The primary structure comprises 748 residues: Disintegrin and metalloproteinase domain-containing protein 10 (748 aa).

An N-terminal signal peptide occupies residues 1-19; it reads MVLLRVLILLLSWAAGMGG. The propeptide occupies 20-213; that stretch reads QYGNPLNKYI…NGPELLRKKR (194 aa). Residues 20–672 are Extracellular-facing; that stretch reads QYGNPLNKYI…SPELYENIAE (653 aa). Positions 171–178 match the Cysteine switch motif; sequence GGCADHSV. C173 lines the Zn(2+) pocket. The region spanning 220-456 is the Peptidase M12B domain; it reads NTCQLYIQTD…KRNNCFVESG (237 aa). Cystine bridges form between C222–C313, C344–C451, C399–C435, C460–C495, C471–C484, C473–C479, C483–C515, C503–C511, C510–C536, C524–C543, C530–C562, C555–C567, C572–C598, C580–C607, C582–C597, C594–C639, and C632–C645. Residues N267 and N278 are each glycosylated (N-linked (GlcNAc...) asparagine). Position 383 (H383) interacts with Zn(2+). E384 is an active-site residue. Zn(2+) is bound by residues H387 and H393. Residue N439 is glycosylated (N-linked (GlcNAc...) asparagine). A Disintegrin domain is found at 457–551; it reads QPICGNGMVE…LCPASDPKPN (95 aa). N551 is a glycosylation site (N-linked (GlcNAc...) asparagine). The chain crosses the membrane as a helical span at residues 673 to 693; sequence WIVAHWWAVLLMGIALIMLMA. At 694 to 748 the chain is on the cytoplasmic side; that stretch reads GFIKICSVHTPSSNPKLPPPKPLPGTLKRRRPPQPIQQPQRQRPRESYQMGHMRR. The interval 704-748 is disordered; that stretch reads PSSNPKLPPPKPLPGTLKRRRPPQPIQQPQRQRPRESYQMGHMRR. The short motif at 708–715 is the SH3-binding element; sequence PKLPPPKP. Residue T719 is modified to Phosphothreonine; by FAM20C. The SH3-binding signature appears at 722 to 728; it reads RRRPPQP. The tract at residues 734 to 748 is interaction with AP2A1, AP2A2 and AP2M1; sequence RQRPRESYQMGHMRR.

In terms of assembly, forms a ternary EFNA5-EPHA3-ADAM10 complex mediating EFNA5 extracellular domain shedding by ADAM10 which regulates the EFNA5-EPHA3 complex internalization and function, the cleavage occurs in trans, with ADAM10 and its substrate being on the membranes of opposing cells. Interacts with the clathrin adapter AP2 complex subunits AP2A1, AP2A2, AP2B1, and AP2M1; this interaction facilitates ADAM10 endocytosis from the plasma membrane during long-term potentiation in hippocampal neurons. Forms a ternary complex composed of ADAM10, EPHA4 and CADH1; within the complex, ADAM10 cleaves CADH1 which disrupts adherens junctions. Interacts with EPHA2. Interacts with NGF in a divalent cation-dependent manner. Interacts with TSPAN14; the interaction promotes ADAM10 maturation and cell surface expression. Interacts with TSPAN5, TSPAN10, TSPAN14, TSPAN15, TSPAN17 and TSPAN33; these interactions regulate ADAM10 substrate specificity, endocytosis and turnover. Interacts (via extracellular domain) with TSPAN33 (via extracellular domain) and (via cytoplasmic domain) with AFDN; interaction with TSPAN33 allows the docking of ADAM10 to zonula adherens through a PDZ11-dependent interaction between TSPAN33 and PLEKHA7 while interaction with AFDN locks ADAM10 at zonula adherens. Interacts with DLG1; this interaction recruits ADAM10 to the cell membrane during long-term depression in hippocampal neurons. Interacts (via extracellular domain) with BACE1 (via extracellular domain). Interacts with FAM171A1. As to quaternary structure, (Microbial infection) Interacts with S.aureus hly; this interaction is necessary for toxin pore formation, disruption of focal adhesions and S.aureus hly-mediated cytotoxicity. It depends on Zn(2+) as a cofactor. The precursor is cleaved by furin and PCSK7. As to expression, expressed in the brain (at protein level). Expressed in spleen, lymph node, thymus, peripheral blood leukocyte, bone marrow, cartilage, chondrocytes and fetal liver.

The protein localises to the cell membrane. The protein resides in the golgi apparatus membrane. Its subcellular location is the cytoplasmic vesicle. It is found in the clathrin-coated vesicle. It localises to the cell projection. The protein localises to the axon. The protein resides in the dendrite. Its subcellular location is the cell junction. It is found in the adherens junction. It localises to the cytoplasm. It carries out the reaction Endopeptidase of broad specificity.. Catalytically inactive when the propeptide is intact and associated with the mature enzyme. The disintegrin and cysteine-rich regions modulate access of substrates to exerts an inhibitory effect on the cleavage of ADAM10 substrates. Transmembrane metalloprotease which mediates the ectodomain shedding of a myriad of transmembrane proteins, including adhesion proteins, growth factor precursors and cytokines being essential for development and tissue homeostasis. Associates with six members of the tetraspanin superfamily TspanC8 which regulate its exit from the endoplasmic reticulum and its substrate selectivity. Cleaves the membrane-bound precursor of TNF-alpha at '76-Ala-|-Val-77' to its mature soluble form. Responsible for the proteolytical release of soluble JAM3 from endothelial cells surface. Responsible for the proteolytic release of several other cell-surface proteins, including heparin-binding epidermal growth-like factor, ephrin-A2, CD44, CDH2 and for constitutive and regulated alpha-secretase cleavage of amyloid precursor protein (APP). Contributes to the normal cleavage of the cellular prion protein. Involved in the cleavage of the adhesion molecule L1 at the cell surface and in released membrane vesicles, suggesting a vesicle-based protease activity. Also controls the proteolytic processing of Notch and mediates lateral inhibition during neurogenesis. Required for the development of type 1 transitional B cells into marginal zone B cells, probably by cleaving Notch. Responsible for the FasL ectodomain shedding and for the generation of the remnant ADAM10-processed FasL (FasL APL) transmembrane form. Also cleaves the ectodomain of the integral membrane proteins CORIN and ITM2B. Mediates the proteolytic cleavage of LAG3, leading to release the secreted form of LAG3. Mediates the proteolytic cleavage of IL6R and IL11RA, leading to the release of secreted forms of IL6R and IL11RA. Enhances the cleavage of CHL1 by BACE1. Cleaves NRCAM. Cleaves TREM2, resulting in shedding of the TREM2 ectodomain. Involved in the development and maturation of glomerular and coronary vasculature. During development of the cochlear organ of Corti, promotes pillar cell separation by forming a ternary complex with CADH1 and EPHA4 and cleaving CADH1 at adherens junctions. May regulate the EFNA5-EPHA3 signaling. Regulates leukocyte transmigration as a sheddase for the adherens junction protein VE-cadherin/CDH5 in endothelial cells. In terms of biological role, (Microbial infection) Promotes the cytotoxic activity of S.aureus hly by binding to the toxin at zonula adherens and promoting formation of toxin pores. This is Disintegrin and metalloproteinase domain-containing protein 10 from Homo sapiens (Human).